Consider the following 378-residue polypeptide: tRNA N(3)-cytidine methyltransferase METTL2B (378 aa).

Alanine 2 carries the post-translational modification N-acetylalanine. A Phosphoserine modification is found at serine 4. Tryptophan 78 and tyrosine 82 together coordinate S-adenosyl-L-methionine. Threonine 154 is modified (phosphothreonine). Residues glycine 188, aspartate 213, aspartate 239, leucine 240, and isoleucine 260 each coordinate S-adenosyl-L-methionine.

The protein belongs to the methyltransferase superfamily. METL family. In terms of assembly, monomer. Interacts with DALRD3.

It is found in the cytoplasm. The enzyme catalyses cytidine(32) in tRNA(Thr) + S-adenosyl-L-methionine = N(3)-methylcytidine(32) in tRNA(Thr) + S-adenosyl-L-homocysteine + H(+). It catalyses the reaction cytidine(32) in tRNA(Arg)(CCU) + S-adenosyl-L-methionine = N(3)-methylcytidine(32) in tRNA(Arg)(CCU) + S-adenosyl-L-homocysteine + H(+). Functionally, S-adenosyl-L-methionine-dependent methyltransferase that mediates N(3)-methylcytidine modification of residue 32 of the tRNA anticodon loop of tRNA(Thr)(UGU) and tRNA(Arg)(CCU). This is tRNA N(3)-cytidine methyltransferase METTL2B from Homo sapiens (Human).